The primary structure comprises 256 residues: GTP cyclohydrolase FolE2 (256 aa).

Belongs to the GTP cyclohydrolase IV family.

The enzyme catalyses GTP + H2O = 7,8-dihydroneopterin 3'-triphosphate + formate + H(+). It functions in the pathway cofactor biosynthesis; 7,8-dihydroneopterin triphosphate biosynthesis; 7,8-dihydroneopterin triphosphate from GTP: step 1/1. Its function is as follows. Converts GTP to 7,8-dihydroneopterin triphosphate. This is GTP cyclohydrolase FolE2 from Maridesulfovibrio salexigens (strain ATCC 14822 / DSM 2638 / NCIMB 8403 / VKM B-1763) (Desulfovibrio salexigens).